Consider the following 852-residue polypeptide: MRVKGIKKNYQHLWRWGGMMLLGILMICSATDKLWVTVYYGVPVWKEANTTLFCASDAKAYDTEIHNVWATHACVPTDPNPQELVMGNVTENFNMWKNDMVEQMHEDIISLWDQSLKPCVKLTPLCVTLNCHDFNATNATSNSGKMMEGGEMKNCSFNITTSIRDKMQKEYALFYKLDIVPIDNDKTNTRYRLISCNTSVITQACPKVTFEPIPIHYCAPAGFAILKCNNKKFNGTGPCTNVSTVQCTHGIRPVVSTQLLLNGSLAEEEVVIRSENFTNNVKTIIVQLNESVEINCTRPNNNTRKRITMGPGRVYYTTGQIIGDIRRAHCNLSRSKWENTLKQIVTKLRVQFKNKTIVFNRSSGGDPEIVMHSFNCGGEFFFCNTTQLFNSTWYRNTTGNITEGNSPITLPCRIKQIINMWQEVGKAMYAPPIRGQIKCSSNITGLLLTRDGGNNNETTDTEIFRPGGGNMRDNWRSELYKYKVVKIEPLGVAPTKAKRRVVQREKRAVGLGALFLGFLGAAGSTMGAASLTLTVQARLLLSGIVQQQNNLLMAIEAQQHMLELTVWGIKQLQARVLAVERYLKDQQLLGIWGCSGKLICTTAVPWNASWSNKSLSDIWDNMTWMEWEREIDNYTNLIYSLIEDSQIQQEKNEKELLELDKWASLWNWFNITNWLWYIKIFIMIVGGLIGLRIVFAVLSIVNRVRQGYSPLSFQTRLPGRRGPDRPEGIEEEGGERDRDRSSPLVDGFLALFWVDLRSLFLFSYHRLRDLLLIVTRIVELLGRRGWEVLKYWWNLLQYWSQELKNSAVSLLNATAIAVGERTDRAIEVVQRAFRAILHIPRRIRQGLERALQ.

The first 32 residues, 1–32, serve as a signal peptide directing secretion; that stretch reads MRVKGIKKNYQHLWRWGGMMLLGILMICSATD. At 33-680 the chain is on the extracellular side; that stretch reads KLWVTVYYGV…ITNWLWYIKI (648 aa). N-linked (GlcNAc...) asparagine; by host glycosylation occurs at asparagine 49. The cysteines at positions 54 and 74 are disulfide-linked. Residues asparagine 88, asparagine 135, asparagine 138, asparagine 154, asparagine 158, asparagine 197, asparagine 234, asparagine 241, asparagine 262, asparagine 276, asparagine 289, asparagine 295, asparagine 301, asparagine 331, asparagine 354, and asparagine 360 are each glycosylated (N-linked (GlcNAc...) asparagine; by host). Disulfide bonds link cysteine 119-cysteine 205, cysteine 126-cysteine 196, cysteine 131-cysteine 155, cysteine 218-cysteine 247, and cysteine 228-cysteine 239. A V1 region spans residues 131-154; it reads CHDFNATNATSNSGKMMEGGEMKN. The segment at 155–196 is V2; it reads CSFNITTSIRDKMQKEYALFYKLDIVPIDNDKTNTRYRLISC. The tract at residues 296–329 is V3; that stretch reads CTRPNNNTRKRITMGPGRVYYTTGQIIGDIRRAH. Residues cysteine 296 and cysteine 330 are joined by a disulfide bond. Residues 362-372 are CD4-binding loop; sequence SSGGDPEIVMH. 2 disulfides stabilise this stretch: cysteine 376-cysteine 439 and cysteine 383-cysteine 412. The tract at residues 383–412 is V4; the sequence is CNTTQLFNSTWYRNTTGNITEGNSPITLPC. Residues asparagine 384, asparagine 390, asparagine 396, asparagine 400, asparagine 442, and asparagine 456 are each glycosylated (N-linked (GlcNAc...) asparagine; by host). 2 V5 regions span residues 454-467 and 457-467; these read NNNE…FRPG and ETTDTEIFRPG. The fusion peptide stretch occupies residues 508–528; the sequence is AVGLGALFLGFLGAAGSTMGA. Residues 570 to 588 are immunosuppression; that stretch reads KQLQARVLAVERYLKDQQL. A disulfide bridge links cysteine 594 with cysteine 600. N-linked (GlcNAc...) asparagine; by host glycans are attached at residues asparagine 607, asparagine 612, asparagine 621, asparagine 633, and asparagine 670. A coiled-coil region spans residues 629-663; it reads REIDNYTNLIYSLIEDSQIQQEKNEKELLELDKWA. Positions 658–679 are MPER; binding to GalCer; the sequence is ELDKWASLWNWFNITNWLWYIK. The chain crosses the membrane as a helical span at residues 681–701; sequence FIMIVGGLIGLRIVFAVLSIV. The Cytoplasmic portion of the chain corresponds to 702–852; sequence NRVRQGYSPL…IRQGLERALQ (151 aa). The short motif at 708-711 is the YXXL motif; contains endocytosis signal element; the sequence is YSPL. The interval 715-741 is disordered; that stretch reads TRLPGRRGPDRPEGIEEEGGERDRDRS.

The protein belongs to the HIV-1 env protein family. As to quaternary structure, the mature envelope protein (Env) consists of a homotrimer of non-covalently associated gp120-gp41 heterodimers. The resulting complex protrudes from the virus surface as a spike. There seems to be as few as 10 spikes on the average virion. Interacts with host CD4, CCR5 and CXCR4. Gp120 also interacts with the C-type lectins CD209/DC-SIGN and CLEC4M/DC-SIGNR (collectively referred to as DC-SIGN(R)). Gp120 and gp41 interact with GalCer. Gp120 interacts with host ITGA4/ITGB7 complex; on CD4+ T-cells, this interaction results in rapid activation of integrin ITGAL/LFA-1, which facilitates efficient cell-to-cell spreading of HIV-1. Gp120 interacts with cell-associated heparan sulfate; this interaction increases virus infectivity on permissive cells and may be involved in infection of CD4- cells. The mature envelope protein (Env) consists of a homotrimer of non-covalently associated gp120-gp41 heterodimers. The resulting complex protrudes from the virus surface as a spike. There seems to be as few as 10 spikes on the average virion. Post-translationally, highly glycosylated by host. The high number of glycan on the protein is reffered to as 'glycan shield' because it contributes to hide protein sequence from adaptive immune system. Palmitoylation of the transmembrane protein and of Env polyprotein (prior to its proteolytic cleavage) is essential for their association with host cell membrane lipid rafts. Palmitoylation is therefore required for envelope trafficking to classical lipid rafts, but not for viral replication. In terms of processing, specific enzymatic cleavages in vivo yield mature proteins. Envelope glycoproteins are synthesized as an inactive precursor that is heavily N-glycosylated and processed likely by host cell furin in the Golgi to yield the mature SU and TM proteins. The cleavage site between SU and TM requires the minimal sequence [KR]-X-[KR]-R. About 2 of the 9 disulfide bonds of gp41 are reduced by P4HB/PDI, following binding to CD4 receptor.

The protein localises to the virion membrane. Its subcellular location is the host cell membrane. It localises to the host endosome membrane. In terms of biological role, oligomerizes in the host endoplasmic reticulum into predominantly trimers. In a second time, gp160 transits in the host Golgi, where glycosylation is completed. The precursor is then proteolytically cleaved in the trans-Golgi and thereby activated by cellular furin or furin-like proteases to produce gp120 and gp41. Its function is as follows. Attaches the virus to the host lymphoid cell by binding to the primary receptor CD4. This interaction induces a structural rearrangement creating a high affinity binding site for a chemokine coreceptor like CXCR4 and/or CCR5. Acts as a ligand for CD209/DC-SIGN and CLEC4M/DC-SIGNR, which are respectively found on dendritic cells (DCs), and on endothelial cells of liver sinusoids and lymph node sinuses. These interactions allow capture of viral particles at mucosal surfaces by these cells and subsequent transmission to permissive cells. HIV subverts the migration properties of dendritic cells to gain access to CD4+ T-cells in lymph nodes. Virus transmission to permissive T-cells occurs either in trans (without DCs infection, through viral capture and transmission), or in cis (following DCs productive infection, through the usual CD4-gp120 interaction), thereby inducing a robust infection. In trans infection, bound virions remain infectious over days and it is proposed that they are not degraded, but protected in non-lysosomal acidic organelles within the DCs close to the cell membrane thus contributing to the viral infectious potential during DCs' migration from the periphery to the lymphoid tissues. On arrival at lymphoid tissues, intact virions recycle back to DCs' cell surface allowing virus transmission to CD4+ T-cells. Functionally, acts as a class I viral fusion protein. Under the current model, the protein has at least 3 conformational states: pre-fusion native state, pre-hairpin intermediate state, and post-fusion hairpin state. During fusion of viral and target intracellular membranes, the coiled coil regions (heptad repeats) assume a trimer-of-hairpins structure, positioning the fusion peptide in close proximity to the C-terminal region of the ectodomain. The formation of this structure appears to drive apposition and subsequent fusion of viral and target cell membranes. Complete fusion occurs in host cell endosomes and is dynamin-dependent, however some lipid transfer might occur at the plasma membrane. The virus undergoes clathrin-dependent internalization long before endosomal fusion, thus minimizing the surface exposure of conserved viral epitopes during fusion and reducing the efficacy of inhibitors targeting these epitopes. Membranes fusion leads to delivery of the nucleocapsid into the cytoplasm. In Human immunodeficiency virus type 1 group M subtype B (isolate BRVA) (HIV-1), this protein is Envelope glycoprotein gp160.